Here is a 1318-residue protein sequence, read N- to C-terminus: Putative tetratricopeptide repeat protein 41 (1318 aa).

6 TPR repeats span residues 399–432 (TQLETDILNEDSDGLVFSFLVEVFIASISLKPCI), 653–684 (WVQEKPNGLLYFWHQSLSAVEHKLLGVITPVE), 817–850 (CRLMFFIGSFLKFMGKTNEAEELFLSVEDMLVQS), 858–891 (LKVQNAIGELYLETGMTQEGFQYFQKAWSSMLRL), 991–1027 (MEFLADLLFFPQRDSKKSQRKQVLKYYKQVIKIKENA), and 1045–1082 (SDTLCKLAGHLLASDSCHHVMIEAVGYLYRSVDLRVIH).

It is found in the cytoplasm. This is Putative tetratricopeptide repeat protein 41 from Homo sapiens (Human).